The primary structure comprises 308 residues: MQTTLKIGTRGSPLALAQAHETQARLMAAHGLPAEAFEVVVISTSGDRIQDRPLSEAGGKGLFTKEIEEALLAGAIDIAVHSSKDMPTQLPDGLELSAFLPREDARDAFVGKAAKTIADLLRGAKVGSSSLRRQALIRRMRPDLDVVMFRGNVQTRLRKLDEGVAAGTILAYAGLKRLGLEHVATDLMPLDIFPPAPGQGAIGIETRIGDRAVEKMLVAIHDVPTGQALACERAFLAALDGSCRTPIAGHATIETGNLSFAGLIISPDGTQSHTVELQGPAQDAARIGDEAARTVRAKAGEKFFDGWV.

S-(dipyrrolylmethanemethyl)cysteine is present on Cys-243.

It belongs to the HMBS family. Monomer. The cofactor is dipyrromethane.

The enzyme catalyses 4 porphobilinogen + H2O = hydroxymethylbilane + 4 NH4(+). It functions in the pathway porphyrin-containing compound metabolism; protoporphyrin-IX biosynthesis; coproporphyrinogen-III from 5-aminolevulinate: step 2/4. In terms of biological role, tetrapolymerization of the monopyrrole PBG into the hydroxymethylbilane pre-uroporphyrinogen in several discrete steps. The sequence is that of Porphobilinogen deaminase from Mesorhizobium japonicum (strain LMG 29417 / CECT 9101 / MAFF 303099) (Mesorhizobium loti (strain MAFF 303099)).